The sequence spans 314 residues: DNA-directed RNA polymerase subunit alpha (314 aa).

Residues 1–227 (MLEIEKPKIE…DYLKLFVALT (227 aa)) are alpha N-terminal domain (alpha-NTD). An alpha C-terminal domain (alpha-CTD) region spans residues 244–314 (QDKILEMTIE…LGLSLRKSED (71 aa)).

The protein belongs to the RNA polymerase alpha chain family. In terms of assembly, homodimer. The RNAP catalytic core consists of 2 alpha, 1 beta, 1 beta' and 1 omega subunit. When a sigma factor is associated with the core the holoenzyme is formed, which can initiate transcription.

The catalysed reaction is RNA(n) + a ribonucleoside 5'-triphosphate = RNA(n+1) + diphosphate. Functionally, DNA-dependent RNA polymerase catalyzes the transcription of DNA into RNA using the four ribonucleoside triphosphates as substrates. The sequence is that of DNA-directed RNA polymerase subunit alpha from Heliobacterium modesticaldum (strain ATCC 51547 / Ice1).